Consider the following 192-residue polypeptide: Imidazoleglycerol-phosphate dehydratase (192 aa).

Belongs to the imidazoleglycerol-phosphate dehydratase family.

It localises to the cytoplasm. The catalysed reaction is D-erythro-1-(imidazol-4-yl)glycerol 3-phosphate = 3-(imidazol-4-yl)-2-oxopropyl phosphate + H2O. It participates in amino-acid biosynthesis; L-histidine biosynthesis; L-histidine from 5-phospho-alpha-D-ribose 1-diphosphate: step 6/9. This Staphylococcus epidermidis (strain ATCC 35984 / DSM 28319 / BCRC 17069 / CCUG 31568 / BM 3577 / RP62A) protein is Imidazoleglycerol-phosphate dehydratase.